The chain runs to 109 residues: U16-hexatoxin-Hi1a (109 aa).

A signal peptide spans 1–16 (LTGHLCCMMIWWQATQ). A propeptide spanning residues 17-43 (VISPPLPVIREENNSHKMGVSLFPLKR) is cleaved from the precursor.

Post-translationally, contains 2 disulfide bonds. In terms of tissue distribution, expressed by the venom gland.

The protein localises to the secreted. Probable ion channel inhibitor. This chain is U16-hexatoxin-Hi1a, found in Hadronyche infensa (Fraser island funnel-web spider).